The chain runs to 617 residues: mRNA export factor MEX67 (617 aa).

The span at M1–Y10 shows a compositional bias: gly residues. Residues M1–H24 form a disordered region. LRR repeat units lie at residues D185–A206, K211–R232, and F237–Q258. The 191-residue stretch at L309–I499 folds into the NTF2 domain. 2 disordered regions span residues E442–I469 and L513–D554. Composition is skewed to low complexity over residues G445–R459 and A526–Q542. A TAP-C domain is found at Q565–Q617.

It belongs to the NXF family. As to quaternary structure, interacts with nucleoporin complex protein MTR2.

The protein localises to the nucleus. Its subcellular location is the cytoplasm. Its function is as follows. Involved in the export of mRNA from the nucleus to the cytoplasm. The sequence is that of mRNA export factor MEX67 from Candida albicans (strain SC5314 / ATCC MYA-2876) (Yeast).